The sequence spans 271 residues: Mannosyl-3-phosphoglycerate phosphatase (271 aa).

Residue Asp13 is the Nucleophile of the active site. Mg(2+) contacts are provided by Asp13, Asp15, and Asp214.

This sequence belongs to the HAD-like hydrolase superfamily. MPGP family. It depends on Mg(2+) as a cofactor.

It localises to the cytoplasm. It carries out the reaction 2-O-(alpha-D-mannosyl)-3-phosphoglycerate + H2O = (2R)-2-O-(alpha-D-mannosyl)-glycerate + phosphate. This chain is Mannosyl-3-phosphoglycerate phosphatase, found in Escherichia coli (strain K12 / DH10B).